Consider the following 122-residue polypeptide: Large ribosomal subunit protein uL14 (122 aa).

Belongs to the universal ribosomal protein uL14 family. In terms of assembly, part of the 50S ribosomal subunit. Forms a cluster with proteins L3 and L19. In the 70S ribosome, L14 and L19 interact and together make contacts with the 16S rRNA in bridges B5 and B8.

Its function is as follows. Binds to 23S rRNA. Forms part of two intersubunit bridges in the 70S ribosome. The protein is Large ribosomal subunit protein uL14 of Clostridium botulinum (strain 657 / Type Ba4).